The chain runs to 325 residues: Putative gluconeogenesis factor (325 aa).

It belongs to the gluconeogenesis factor family.

It is found in the cytoplasm. Required for morphogenesis under gluconeogenic growth conditions. This is Putative gluconeogenesis factor from Streptococcus pyogenes serotype M1.